The primary structure comprises 351 residues: Sulfate/thiosulfate import ATP-binding protein CysA (351 aa).

Residues 5 to 235 (IVVADATKRY…PANAFVMSFL (231 aa)) enclose the ABC transporter domain. 37–44 (GPSGSGKS) is an ATP binding site.

It belongs to the ABC transporter superfamily. Sulfate/tungstate importer (TC 3.A.1.6) family. In terms of assembly, the complex is composed of two ATP-binding proteins (CysA), two transmembrane proteins (CysT and CysW) and a solute-binding protein (CysP).

It localises to the cell membrane. It catalyses the reaction sulfate(out) + ATP + H2O = sulfate(in) + ADP + phosphate + H(+). It carries out the reaction thiosulfate(out) + ATP + H2O = thiosulfate(in) + ADP + phosphate + H(+). In terms of biological role, part of the ABC transporter complex CysAWTP involved in sulfate/thiosulfate import. Responsible for energy coupling to the transport system. The protein is Sulfate/thiosulfate import ATP-binding protein CysA of Mycobacterium bovis (strain ATCC BAA-935 / AF2122/97).